Reading from the N-terminus, the 248-residue chain is MAVTDLSLTNSSLMPTLNPMIQQLALAIAASWQSLPLKPYQLPEDLGYVEGRLEGEKLVIENRCYQTPQFRKMHLELAKVGKGLDILHCVMFPEPLYGLPLFGCDIVAGPGGVSAAIADLSPTQSDRQLPAAYQKSLAELGQPEFEQQRELPPWGEIFSEYCLFIRPSNVTEEERFVQRVVDFLQIHCHQSIVAEPLSEAQTLEHRQGQIHYCQQQQKNDKTRRVLEKAFGEAWAERYMSQVLFDVIQ.

This sequence belongs to the HY2 family.

The catalysed reaction is (2R,3Z)-phycocyanobilin + 4 oxidized [2Fe-2S]-[ferredoxin] = biliverdin IXalpha + 4 reduced [2Fe-2S]-[ferredoxin] + 4 H(+). Its function is as follows. Catalyzes the four-electron reduction of biliverdin IX-alpha (2-electron reduction at both the A and D rings); the reaction proceeds via an isolatable 2-electron intermediate, 181,182-dihydrobiliverdin. This chain is Phycocyanobilin:ferredoxin oxidoreductase (pcyA), found in Synechocystis sp. (strain ATCC 27184 / PCC 6803 / Kazusa).